A 92-amino-acid chain; its full sequence is Elongation factor 1-beta (92 aa).

Belongs to the EF-1-beta/EF-1-delta family.

In terms of biological role, promotes the exchange of GDP for GTP in EF-1-alpha/GDP, thus allowing the regeneration of EF-1-alpha/GTP that could then be used to form the ternary complex EF-1-alpha/GTP/AAtRNA. The protein is Elongation factor 1-beta of Pyrobaculum neutrophilum (strain DSM 2338 / JCM 9278 / NBRC 100436 / V24Sta) (Thermoproteus neutrophilus).